A 563-amino-acid chain; its full sequence is Zinc finger protein 503 (563 aa).

Positions 1–10 are enriched in polar residues; sequence MITSPSASRN. Disordered stretches follow at residues 1-48 and 101-226; these read MITS…PLRQ and SQIG…TSVS. Composition is skewed to low complexity over residues 19-33 and 112-122; these read SSSSSSRNNSSAVAS and SKLSSVTSNGS. Residues 174–194 are compositionally biased toward polar residues; that stretch reads ATCQPFTPRTGSPNSSTSASP. A compositionally biased stretch (basic and acidic residues) spans 199-211; it reads GKGERDEKKDSDC. Polar residues predominate over residues 212–226; the sequence is NKNCSSDGSAPTSVS. Residues 431–459 form a C2H2-type zinc finger; it reads HVCNWVSANGPCDKRFSSSEELLNHLRTH.

Belongs to the Elbow/Noc family. As to quaternary structure, interacts with nlz1.

It localises to the nucleus. In terms of biological role, required for segmental gene expression during hindbrain development. May function as a transcriptional repressor. This Danio rerio (Zebrafish) protein is Zinc finger protein 503 (znf503).